Consider the following 244-residue polypeptide: Nonsense-mediated decay protein 4 (244 aa).

The protein localises to the cytoplasm. Its function is as follows. Involved in nonsense-mediated decay of mRNAs containing premature stop codons. The sequence is that of Nonsense-mediated decay protein 4 (NMD4) from Kluyveromyces lactis (strain ATCC 8585 / CBS 2359 / DSM 70799 / NBRC 1267 / NRRL Y-1140 / WM37) (Yeast).